The primary structure comprises 233 residues: Ion-translocating oxidoreductase complex subunit E (233 aa).

Helical transmembrane passes span 18–38 (ALVQ…ATNA), 39–59 (LGLG…VSAL), 69–89 (IPIY…LINA), 92–112 (FGLY…CIVI), 128–148 (ALDG…LGAL), and 182–202 (PFLL…LLAG).

It belongs to the NqrDE/RnfAE family. In terms of assembly, the complex is composed of six subunits: RnfA, RnfB, RnfC, RnfD, RnfE and RnfG.

The protein resides in the cell inner membrane. Functionally, part of a membrane-bound complex that couples electron transfer with translocation of ions across the membrane. This is Ion-translocating oxidoreductase complex subunit E from Yersinia pestis bv. Antiqua (strain Angola).